Consider the following 98-residue polypeptide: MMPINLNLIMAFSLALIGALVYRSHLMSTLLCLEGMMLSLFIQMALLISHFHMFSMSMAPLILLVFSACEAGLGLALLVKTSSNYGNDYVQNLNLLQC.

A run of 3 helical transmembrane segments spans residues 1–21 (MMPI…GALV), 28–48 (STLL…ALLI), and 59–79 (APLI…ALLV).

It belongs to the complex I subunit 4L family. As to quaternary structure, core subunit of respiratory chain NADH dehydrogenase (Complex I) which is composed of 45 different subunits.

The protein localises to the mitochondrion inner membrane. The catalysed reaction is a ubiquinone + NADH + 5 H(+)(in) = a ubiquinol + NAD(+) + 4 H(+)(out). Functionally, core subunit of the mitochondrial membrane respiratory chain NADH dehydrogenase (Complex I) which catalyzes electron transfer from NADH through the respiratory chain, using ubiquinone as an electron acceptor. Part of the enzyme membrane arm which is embedded in the lipid bilayer and involved in proton translocation. The chain is NADH-ubiquinone oxidoreductase chain 4L (MT-ND4L) from Distoechurus pennatus (Feather-tailed possum).